A 533-amino-acid chain; its full sequence is WUSCHEL-related homeobox 7 (533 aa).

2 disordered regions span residues 1–74 (MASS…NPRP) and 125–212 (SKNK…STQA). Over residues 28–41 (AGSPPSLLSGSSAG) the composition is skewed to low complexity. The segment covering 59–68 (GEERVPDPKP) has biased composition (basic and acidic residues). The homeobox; WUS-type DNA-binding region spans 65–129 (DPKPRWNPRP…NRKSRSKNKL (65 aa)). Over residues 132 to 143 (GGTGRAGLGLGG) the composition is skewed to gly residues. The span at 161–174 (FTPPPPILPAPQPV) shows a compositional bias: pro residues. Positions 175–202 (QPQQQLVSPVAAPTSSSSSSSDRSSGSS) are enriched in low complexity.

This sequence belongs to the WUS homeobox family.

The protein resides in the nucleus. Transcription factor which may be involved in developmental processes. The polypeptide is WUSCHEL-related homeobox 7 (WOX7) (Oryza sativa subsp. japonica (Rice)).